The primary structure comprises 258 residues: ATP synthase subunit a (258 aa).

Helical transmembrane passes span 38-58, 94-114, 118-138, 193-213, and 215-235; these read KPVWFLWLGAAITFLFMYVGA, WFPYSLTLFIFLLVLNIIGLF, YPVTSNISFTATLALFTFVLT, ILAGHLIIFVFLSLILYFGLP, and AFVSVPFAVVFYAFEIFVAVI.

The protein belongs to the ATPase A chain family. F-type ATPases have 2 components, CF(1) - the catalytic core - and CF(0) - the membrane proton channel. CF(1) has five subunits: alpha(3), beta(3), gamma(1), delta(1), epsilon(1). CF(0) has three main subunits: a(1), b(2) and c(9-12). The alpha and beta chains form an alternating ring which encloses part of the gamma chain. CF(1) is attached to CF(0) by a central stalk formed by the gamma and epsilon chains, while a peripheral stalk is formed by the delta and b chains.

It localises to the cell membrane. Functionally, key component of the proton channel; it plays a direct role in the translocation of protons across the membrane. This is ATP synthase subunit a from Rubrobacter xylanophilus (strain DSM 9941 / JCM 11954 / NBRC 16129 / PRD-1).